A 250-amino-acid polypeptide reads, in one-letter code: uncharacterized protein (250 aa).

An ABC transporter domain is found at 7–244 (LKVEDLHVYR…YKKECGKCYK (238 aa)). 39–46 (GPNGAGKS) contacts ATP.

This sequence belongs to the ABC transporter superfamily.

This is an uncharacterized protein from Methanocaldococcus jannaschii (strain ATCC 43067 / DSM 2661 / JAL-1 / JCM 10045 / NBRC 100440) (Methanococcus jannaschii).